The chain runs to 317 residues: tRNA-dihydrouridine(20a/20b) synthase [NAD(P)+]-like (317 aa).

Residues 33-35 (PMV) and Q87 contribute to the FMN site. Catalysis depends on C116, which acts as the Proton donor. FMN is bound by residues K158, H186, 216 to 218 (NGD), and 240 to 241 (AR).

It belongs to the Dus family. Dus4 subfamily. FMN serves as cofactor.

The catalysed reaction is 5,6-dihydrouridine(20a) in tRNA + NADP(+) = uridine(20a) in tRNA + NADPH + H(+). It catalyses the reaction 5,6-dihydrouridine(20a) in tRNA + NAD(+) = uridine(20a) in tRNA + NADH + H(+). It carries out the reaction 5,6-dihydrouridine(20b) in tRNA + NAD(+) = uridine(20b) in tRNA + NADH + H(+). The enzyme catalyses 5,6-dihydrouridine(20b) in tRNA + NADP(+) = uridine(20b) in tRNA + NADPH + H(+). In terms of biological role, catalyzes the synthesis of dihydrouridine, a modified base found in the D-loop of most tRNAs. The chain is tRNA-dihydrouridine(20a/20b) synthase [NAD(P)+]-like (DUS4L) from Homo sapiens (Human).